Reading from the N-terminus, the 230-residue chain is Aspartate and serine-rich protein (230 aa).

N-linked (GlcNAc...) asparagine glycosylation is found at N17, N132, and N139. The tract at residues 112–230 is disordered; it reads LNGGATAGGV…DSDSNDTDSD (119 aa). The segment covering 126 to 140 has biased composition (acidic residues); it reads DTDESSNDTDEDSND. A compositionally biased stretch (basic and acidic residues) spans 141–161; the sequence is SDSKDTDSDSKDTDSDSKDSD. N-linked (GlcNAc...) asparagine glycosylation is found at N163 and N170. Residues 173-223 are compositionally biased toward basic and acidic residues; that stretch reads DSKDTDSDSKDSDSKDTDSDSKDTDSDSKDSDSKDTDSDSKDTDSDSKDSD. N225 carries N-linked (GlcNAc...) asparagine glycosylation.

As to expression, component of the acid-insoluble organic matrix of calcified layers of the shell (at protein level).

It is found in the secreted. This chain is Aspartate and serine-rich protein, found in Lottia gigantea (Giant owl limpet).